The chain runs to 128 residues: Cytochrome c oxidase subunit 5B, mitochondrial (128 aa).

Residues 1–30 (MKRGSAALEVRELKMQTPTASCVLSTQRAN) constitute a mitochondrion transit peptide. Lys-67 and Lys-85 each carry N6-acetyllysine. Cys-90, Cys-92, Cys-112, and Cys-115 together coordinate Zn(2+). Lys-120 bears the N6-acetyllysine mark.

This sequence belongs to the cytochrome c oxidase 5b family. Expressed in testis. Not expressed in brain, heart, liver, kidney, spleen, lung, duodenum, muscle, epididymis, vagina, uterus and ovary.

The protein resides in the mitochondrion inner membrane. This protein is one of the nuclear-coded polypeptide chains of cytochrome c oxidase, the terminal oxidase in mitochondrial electron transport. This chain is Cytochrome c oxidase subunit 5B, mitochondrial, found in Vulpes vulpes (Red fox).